The primary structure comprises 417 residues: NADH-quinone oxidoreductase subunit D (417 aa).

It belongs to the complex I 49 kDa subunit family. NDH-1 is composed of 14 different subunits. Subunits NuoB, C, D, E, F, and G constitute the peripheral sector of the complex.

It localises to the cell inner membrane. The catalysed reaction is a quinone + NADH + 5 H(+)(in) = a quinol + NAD(+) + 4 H(+)(out). In terms of biological role, NDH-1 shuttles electrons from NADH, via FMN and iron-sulfur (Fe-S) centers, to quinones in the respiratory chain. The immediate electron acceptor for the enzyme in this species is believed to be ubiquinone. Couples the redox reaction to proton translocation (for every two electrons transferred, four hydrogen ions are translocated across the cytoplasmic membrane), and thus conserves the redox energy in a proton gradient. In Nitrosomonas europaea (strain ATCC 19718 / CIP 103999 / KCTC 2705 / NBRC 14298), this protein is NADH-quinone oxidoreductase subunit D.